The primary structure comprises 699 residues: Glycine--tRNA ligase beta subunit (699 aa).

This sequence belongs to the class-II aminoacyl-tRNA synthetase family. As to quaternary structure, tetramer of two alpha and two beta subunits.

It localises to the cytoplasm. It carries out the reaction tRNA(Gly) + glycine + ATP = glycyl-tRNA(Gly) + AMP + diphosphate. The sequence is that of Glycine--tRNA ligase beta subunit from Bradyrhizobium diazoefficiens (strain JCM 10833 / BCRC 13528 / IAM 13628 / NBRC 14792 / USDA 110).